The chain runs to 505 residues: Nostrin (505 aa).

The region spanning methionine 1 to aspartate 260 is the F-BAR domain. Coiled coils occupy residues alanine 101–serine 128, isoleucine 160–leucine 222, and lysine 295–serine 332. Serine 114 is subject to Phosphoserine. The region spanning alanine 292–glutamate 372 is the REM-1 domain. The 60-residue stretch at leucine 437 to leucine 496 folds into the SH3 domain. Phosphoserine is present on serine 478.

Homotrimer. Interacts with DAB2. Interacts with NOS3, DNM2, WASL and CAV1. Interacts (via SH3 domain) with DNM2; this interaction allows the recruitment of NOS3 to dynamin-positive structures. In terms of tissue distribution, present in pulmonary arterial endothelial cells (at protein level).

It is found in the cell membrane. Its subcellular location is the cytoplasmic vesicle. It localises to the cytoplasm. The protein localises to the cytoskeleton. Its function is as follows. Multivalent adapter protein which may decrease NOS3 activity by inducing its translocation away from the plasma membrane. This chain is Nostrin, found in Bos taurus (Bovine).